A 158-amino-acid polypeptide reads, in one-letter code: Cytochrome c-type biogenesis protein CcmE (158 aa).

The Cytoplasmic segment spans residues 1-8 (MNIRRRRR). Residues 9–29 (LLVVVAILVGLGLATGLVMYA) traverse the membrane as a helical; Signal-anchor for type II membrane protein segment. At 30–158 (LRSNIDLFYT…GLLNVSEPTR (129 aa)) the chain is on the periplasmic side. Residues H130 and Y134 each coordinate heme.

Belongs to the CcmE/CycJ family.

Its subcellular location is the cell inner membrane. Heme chaperone required for the biogenesis of c-type cytochromes. Transiently binds heme delivered by CcmC and transfers the heme to apo-cytochromes in a process facilitated by CcmF and CcmH. This Tatumella citrea (Pantoea citrea) protein is Cytochrome c-type biogenesis protein CcmE.